Here is a 506-residue protein sequence, read N- to C-terminus: Cytochrome P450 monooxygenase BOA3 (506 aa).

A helical transmembrane segment spans residues 15–35 (IYLWIGFVLVVLLAYPTYFAI). Residue Cys-451 participates in heme binding.

Belongs to the cytochrome P450 family. Heme serves as cofactor.

It localises to the membrane. It functions in the pathway polyketide biosynthesis. In terms of biological role, cytochrome P450 monooxygenase; part of the gene cluster A that mediates the biosynthesis of botcinic acid and its botcinin derivatives, acetate-derived polyketides that contribute to virulence when combined with the sesquiterpene botrydial. Botcinic acid and its derivatives have been shown to induce chlorosis and necrosis during host plant infection, but also have antifungal activities. Two polyketide synthases, BOA6 and BOA9, are involved in the biosynthesis of botcinins. BOA6 mediates the formation of the per-methylated tetraketide core by condensation of four units of malonyl-CoA with one unit of acetyl-CoA, which would be methylated in activated methylene groups to yield a bicyclic acid intermediate that could then either be converted to botrylactone derivatives or lose the starter acetate unit through a retro-Claisen type C-C bond cleavage to yield botcinin derivatives. The second polyketide synthase, BOA9, is probably required for the biosynthesis of the tetraketide side chain of botcinins. The methyltransferase (MT) domain within BOA6 is probably responsible for the incorporation of four methyl groups. The trans-enoyl reductase BOA5 might take over the enoyl reductase function of BOA6 that misses an ER domain. The monooxygenases BOA2, BOA3 and BOA4 might be involved in further hydroxylations at C4, C5 and C8, whereas BOA7, close to BOA9, could potentially be involved in the hydroxylation at C4 in the side chain of botcinins. The polypeptide is Cytochrome P450 monooxygenase BOA3 (Botryotinia fuckeliana (strain B05.10) (Noble rot fungus)).